A 119-amino-acid polypeptide reads, in one-letter code: Holo-[acyl-carrier-protein] synthase (119 aa).

The Mg(2+) site is built by D8 and E59.

It belongs to the P-Pant transferase superfamily. AcpS family. The cofactor is Mg(2+).

It localises to the cytoplasm. It carries out the reaction apo-[ACP] + CoA = holo-[ACP] + adenosine 3',5'-bisphosphate + H(+). Functionally, transfers the 4'-phosphopantetheine moiety from coenzyme A to a Ser of acyl-carrier-protein. This Streptococcus agalactiae serotype Ia (strain ATCC 27591 / A909 / CDC SS700) protein is Holo-[acyl-carrier-protein] synthase.